The primary structure comprises 98 residues: MSLTYLNIMLAFSTSLLGLLMYRSHLMSSLLCLEGLVLSLFVLTTLMVLTINLTLTNLLPIILLVFAACEAALGLSLLVVVSNTYGVDYVQNLNLLKC.

3 consecutive transmembrane segments (helical) span residues Met1–Met21, Leu31–Ile51, and Ile61–Val81.

This sequence belongs to the complex I subunit 4L family. As to quaternary structure, core subunit of respiratory chain NADH dehydrogenase (Complex I) which is composed of 45 different subunits.

It is found in the mitochondrion inner membrane. The catalysed reaction is a ubiquinone + NADH + 5 H(+)(in) = a ubiquinol + NAD(+) + 4 H(+)(out). Core subunit of the mitochondrial membrane respiratory chain NADH dehydrogenase (Complex I) which catalyzes electron transfer from NADH through the respiratory chain, using ubiquinone as an electron acceptor. Part of the enzyme membrane arm which is embedded in the lipid bilayer and involved in proton translocation. The polypeptide is NADH-ubiquinone oxidoreductase chain 4L (MT-ND4L) (Chalinolobus tuberculatus (New Zealand long-tailed bat)).